The chain runs to 925 residues: MYGIDNYPKNYHASGIGLVNLAALGYSKNEVSGGNEGGGAPKPKAGLYPSLPYPSSESVGGMPYVVKQTSHAQNASYAGPTMGMGMPVPEAPSAPAPYPSATPYPGSGLYPSLPSANVSSLPYPTAPMAPYPTGMPYPTGMPQPNLPYPAAPLAPYPSAMPGLPGMPMPYAPMPTSPAPQHNIGFPALPYPTAPPPESAPTQEEEPSVGVAELSFTSVKVPENQNMFWMGRKATSARQNSVSKGDFQSLRDSCLANGTMFEDPDFPATNASLMYSRRPDRYYEWLRPGDIADDPQFFVEGYSRFDVQQGELGDCWLLAAAANLTQDSTLFFRVIPPDQDFQENYAGIFHFKFWQYGKWVEVVIDDRLPTYNGELIYMHSTEKNEFWSALLEKAYAKLHGSYEALKGGTTCEAMEDFTGGVTEWYDIKEAPPNLFSIMMKAAERGSMMGCSLEPDPHVLEAETPQGLIRGHAYSITKVCLMDISTPNRQGKLPMIRMRNPWGNDAEWSGPWSDSSPEWRFIPEHTKEEIGLNFDRDGEFWMSFQDFLNHFDRVEICNLSPDSLTEDQQHSSRRKWEMSMFEGEWTSGVTAGGCRNFLETFWHNPQYIISLEDPDDEDDDGKCTAIVALMQKNRRSKRNVGIDCLTIGFAIYHLTDRDMQVKPQGLNFFKYRASVARSPHFINTREVCARFKLPPGHYLIVPSTFDPNEEGEFIIRVFSETRNNMEENDDEVGFGETDDRIAPSLPPPTPKEEDDPQRIALRRLFDSVAGSDEEVDWQELKRILDHSMRDVMVGSDGFSKDAVRSMVAMLDKDRSGRLGFEEFEALLTDIAKWRAVFKLYDTRRTGSIDGFHLRGALNSAGYHLNNRLLNALAHRYGSREGQIPFDDFLMCAIKVRTFIEMFRERDTDNSDTAFFNLDDWLERTIYS.

One can recognise a Calpain catalytic domain in the interval 259 to 558 (MFEDPDFPAT…FDRVEICNLS (300 aa)). Residues cysteine 314, histidine 470, and asparagine 498 contribute to the active site. The interval 559-728 (PDSLTEDQQH…TRNNMEENDD (170 aa)) is domain III. The interval 723-753 (MEENDDEVGFGETDDRIAPSLPPPTPKEEDD) is disordered. Positions 729 to 748 (EVGFGETDDRIAPSLPPPTP) are linker. Positions 749–925 (KEEDDPQRIA…DDWLERTIYS (177 aa)) are domain IV. EF-hand domains lie at 796 to 831 (FSKD…IAKW) and 826 to 861 (TDIA…AGYH). Positions 809, 811, 813, 815, 820, 839, 843, 845, and 850 each coordinate Ca(2+).

This sequence belongs to the peptidase C2 family. Post-translationally, undergoes calcium-dependent autolytic cleavage between Asn-74 and Ala-75 and between Gln-224 and Asn-225 to produce two major products, calpain B catalytic subunit 1 and calpain B catalytic subunit 2. This autolysis is necessary for activation of the protein. Strongly expressed in follicular and border cells of the oocyte. Ubiquitously expressed in early embryos. Localized to the trachea and their orifices, and to the larynx of late embryos. Restricted to the salivary gland in third instar larvae.

Its subcellular location is the cytoplasm. The protein resides in the membrane. Its activity is regulated as follows. Activated by millimolar concentrations of calcium. Functionally, calcium-regulated non-lysosomal thiol-protease. In Drosophila melanogaster (Fruit fly), this protein is Calpain-B.